The sequence spans 1134 residues: Error-prone DNA polymerase (1134 aa).

The disordered stretch occupies residues 1-33 (MSYHNPPIPWRELEGRISGRPAPHGHQESHADQ).

The protein belongs to the DNA polymerase type-C family. DnaE2 subfamily.

It is found in the cytoplasm. The catalysed reaction is DNA(n) + a 2'-deoxyribonucleoside 5'-triphosphate = DNA(n+1) + diphosphate. DNA polymerase involved in damage-induced mutagenesis and translesion synthesis (TLS). It is not the major replicative DNA polymerase. This Cutibacterium acnes (strain DSM 16379 / KPA171202) (Propionibacterium acnes) protein is Error-prone DNA polymerase.